A 149-amino-acid polypeptide reads, in one-letter code: Large ribosomal subunit protein uL15 (149 aa).

The tract at residues 1 to 61 (MELNSLRPAL…GGQMPLQRRL (61 aa)) is disordered. The span at 30–39 (TATKGHKGQK) shows a compositional bias: basic residues.

It belongs to the universal ribosomal protein uL15 family. As to quaternary structure, part of the 50S ribosomal subunit.

Binds to the 23S rRNA. This Trichlorobacter lovleyi (strain ATCC BAA-1151 / DSM 17278 / SZ) (Geobacter lovleyi) protein is Large ribosomal subunit protein uL15.